Reading from the N-terminus, the 396-residue chain is Enoyl-[acyl-carrier-protein] reductase [NADH] (396 aa).

NAD(+)-binding positions include 47-52 (GASTGF), 73-74 (FE), 110-111 (DA), and 138-139 (LA). Tyr-224 lines the substrate pocket. Tyr-234 acts as the Proton donor in catalysis. NAD(+)-binding positions include Lys-243 and 272-274 (LVT).

This sequence belongs to the TER reductase family. In terms of assembly, monomer.

It carries out the reaction a 2,3-saturated acyl-[ACP] + NAD(+) = a (2E)-enoyl-[ACP] + NADH + H(+). It functions in the pathway lipid metabolism; fatty acid biosynthesis. Its function is as follows. Involved in the final reduction of the elongation cycle of fatty acid synthesis (FAS II). Catalyzes the reduction of a carbon-carbon double bond in an enoyl moiety that is covalently linked to an acyl carrier protein (ACP). This chain is Enoyl-[acyl-carrier-protein] reductase [NADH], found in Flavobacterium psychrophilum (strain ATCC 49511 / DSM 21280 / CIP 103535 / JIP02/86).